The sequence spans 250 residues: MEAVRPDSCERGTAAARAEERPAPEARAHFRVTRFIMEAGVKLGMQSIPIATACTIYHKFFCEINLDAYDLYLVAMSSLYLAGKVEEQHLRTRDIINVSHRYFNPGSEPLELDSRFWELRDSIVQCELLMLRVLRFQVSFQHPHKYLLHYLISLKNWLNRYSWQRTPISVTAWALLRDSYHGGLCLRFQAQHLAVAVLYLALQVYGVEVPAEGEAEKPWWQVFSDDLTKPIIDNIVSDLIQIYTMDTEIP.

Position 1 is an N-acetylmethionine (Met-1). Positions 1-10 are enriched in basic and acidic residues; that stretch reads MEAVRPDSCE. Positions 1–22 are disordered; sequence MEAVRPDSCERGTAAARAEERP.

This sequence belongs to the cyclin family. Cyclin-like FAM58 subfamily. In terms of assembly, associates with CDK10 to promote its kinase activity.

Its function is as follows. Activating cyclin for the cyclin-associated kinase CDK10. The protein is Cyclin-Q (Ccnq) of Rattus norvegicus (Rat).